The primary structure comprises 260 residues: Cytosolic Fe-S cluster assembly factor Nubp2 homolog 2 (260 aa).

14-21 is an ATP binding site; sequence GKGGVGKS. The [4Fe-4S] cluster site is built by cysteine 188 and cysteine 191.

This sequence belongs to the Mrp/NBP35 ATP-binding proteins family. NUBP2/CFD1 subfamily. Heterotetramer of 2 Nubp1 and 2 Nubp2 chains. The cofactor is [4Fe-4S] cluster.

It is found in the cytoplasm. Functionally, component of the cytosolic iron-sulfur (Fe/S) protein assembly (CIA) machinery. Required for maturation of extramitochondrial Fe-S proteins. The Nubp1-Nubp2 heterotetramer forms a Fe-S scaffold complex, mediating the de novo assembly of an Fe-S cluster and its transfer to target apoproteins. This Drosophila yakuba (Fruit fly) protein is Cytosolic Fe-S cluster assembly factor Nubp2 homolog 2.